The primary structure comprises 165 residues: Large ribosomal subunit protein uL10 (165 aa).

It belongs to the universal ribosomal protein uL10 family. As to quaternary structure, part of the ribosomal stalk of the 50S ribosomal subunit. The N-terminus interacts with L11 and the large rRNA to form the base of the stalk. The C-terminus forms an elongated spine to which L12 dimers bind in a sequential fashion forming a multimeric L10(L12)X complex.

Forms part of the ribosomal stalk, playing a central role in the interaction of the ribosome with GTP-bound translation factors. The sequence is that of Large ribosomal subunit protein uL10 from Shewanella pealeana (strain ATCC 700345 / ANG-SQ1).